Here is a 525-residue protein sequence, read N- to C-terminus: MVPLRLVLLLHIIHFSCENEVGSAANNGSAQLYNYRKIHLPDDHIPYYLHSNRHVAALCLQDLHCPYKQHLQNLNSCWGYEKTCAEGHRFGYPVCDQVDFGWAKTIEESQQVFWRQADFGYVKERLAETQILCRPQEQGDSMLACSQNLQHCRATNLYLDLRHPRRGQENFKEDFLQEGEIGGHCDLDKQALLSQGAWKSPLQSWFAELQSYSSFKFKPIEDAHCDIIIEKPTYFMKLDAGVNMYHHFCDFVNLYITQHVNNSFSTDINIVMWTTSVYGYGDLFSDTWKAFTDYEITHLKAYDNKRVCFKDAVFALLPRMRYGLFYNTPLISHCHGSGLFRAFSQHVLHRLNITQHPATEAKIRVTILVRSTEFRKILNLDELVQALEAVPTFQVKVVDYKYRVLGFLEQLSITHNSDIFIGMHGAGLTHLLFLPDWAVVFELYNCEDARCYLDLARLRGIQYMTWEKGDKVFPQDKGHHPNLGEHPKFTNYAFDVEEFLRLVQQGATYVSRHSKWPLRRTRDEL.

Residues 1-24 form the signal peptide; that stretch reads MVPLRLVLLLHIIHFSCENEVGSA. Positions 293-295 match the Required for optimal activity motif; sequence DYE. N352 is a glycosylation site (N-linked (GlcNAc...) asparagine). Residues 522–525 carry the Prevents secretion from ER motif; that stretch reads RDEL.

This sequence belongs to the glycosyltransferase 61 family.

The protein resides in the endoplasmic reticulum lumen. It catalyses the reaction L-seryl-[protein] + UDP-N-acetyl-alpha-D-glucosamine = 3-O-(N-acetyl-beta-D-glucosaminyl)-L-seryl-[protein] + UDP + H(+). It carries out the reaction L-threonyl-[protein] + UDP-N-acetyl-alpha-D-glucosamine = 3-O-(N-acetyl-beta-D-glucosaminyl)-L-threonyl-[protein] + UDP + H(+). Catalyzes the transfer of a single N-acetylglucosamine from UDP-GlcNAc to a serine or threonine residue in extracellular proteins resulting in their modification with a beta-linked N-acetylglucosamine (O-GlcNAc). Specifically glycosylates the Thr residue located between the fifth and sixth conserved cysteines of folded EGF-like domains. This chain is EGF domain-specific O-linked N-acetylglucosamine transferase (eogt), found in Xenopus laevis (African clawed frog).